The primary structure comprises 198 residues: E3 ubiquitin-protein ligase rnf152 (198 aa).

Residues 12–55 (CQICFNYFSQRRLPKLLHCQHTCCSVCLSQMRLSQREIRCPWCR) form an RING-type zinc finger. Residues 162-182 (TGVCTVLLVAFILIFLLGIVL) traverse the membrane as a helical segment.

It belongs to the RNF152 family.

It is found in the lysosome membrane. It catalyses the reaction S-ubiquitinyl-[E2 ubiquitin-conjugating enzyme]-L-cysteine + [acceptor protein]-L-lysine = [E2 ubiquitin-conjugating enzyme]-L-cysteine + N(6)-ubiquitinyl-[acceptor protein]-L-lysine.. The protein operates within protein modification; protein ubiquitination. Its function is as follows. E3 ubiquitin-protein ligase that acts as a negative regulator of mTORC1 signaling by mediating ubiquitination of RagA/RRAGA and RHEB. Catalyzes 'Lys-63'-linked polyubiquitination of RagA/RRAGA in response to amino acid starvation, thereby regulating mTORC1 signaling. Also mediates monoubiquitination of RHEB, promoting its association with the TSC-TBC complex and subsequent inhibition. Also mediates 'Lys-48'-linked polyubiquitination of target proteins and their subsequent targeting to the proteasome for degradation. This Danio rerio (Zebrafish) protein is E3 ubiquitin-protein ligase rnf152.